Consider the following 145-residue polypeptide: Ribosome maturation factor RimP (145 aa).

It belongs to the RimP family.

It is found in the cytoplasm. Functionally, required for maturation of 30S ribosomal subunits. The sequence is that of Ribosome maturation factor RimP from Azotobacter vinelandii (strain DJ / ATCC BAA-1303).